Here is an 846-residue protein sequence, read N- to C-terminus: uncharacterized protein (846 aa).

Disordered stretches follow at residues 159-217 (VPTF…INHI), 254-276 (CNLNGNNNNNNNNNNNNNNSNSN), 332-414 (NKLN…PLSI), 459-501 (GSSI…SNSL), 556-651 (QQQQ…NFND), and 803-846 (TTTT…NKNK). The span at 163 to 217 (HNQNQNNNNQNNNQNNNNNNNNNNNNNNNNNNNNNNNSQNNNNNQNNNNNHINHI) shows a compositional bias: low complexity. Residues 355–414 (LQSPNSQSLANSSANISSNALNQSSSSQQQQPQSTSQQQQQQHKMNSSSGNISPPLPLSI) show a composition bias toward low complexity. A compositionally biased stretch (polar residues) spans 459 to 482 (GSSITPKNLSPLSSSAPNTPKQFA). 3 stretches are compositionally biased toward low complexity: residues 483–501 (SLSSSSSPSSSTSSSSNSL), 568–642 (QQQQ…QPNN), and 811–846 (NNNNNNNNNNNNNNNNNNNNNNNNNNNNNNNNNKNK).

This is an uncharacterized protein from Dictyostelium discoideum (Social amoeba).